The sequence spans 74 residues: UPF0435 protein BcerKBAB4_0386 (74 aa).

It belongs to the UPF0435 family.

The protein is UPF0435 protein BcerKBAB4_0386 of Bacillus mycoides (strain KBAB4) (Bacillus weihenstephanensis).